Consider the following 593-residue polypeptide: Aspartate--tRNA ligase (593 aa).

An L-aspartate-binding site is contributed by Glu180. The interval 204 to 207 is aspartate; the sequence is QLFK. Arg226 lines the L-aspartate pocket. ATP-binding positions include 226-228 and Gln235; that span reads RDE. His454 is a binding site for L-aspartate. Glu488 provides a ligand contact to ATP. Arg495 contributes to the L-aspartate binding site. Residue 540 to 543 participates in ATP binding; it reads GFDR.

The protein belongs to the class-II aminoacyl-tRNA synthetase family. Type 1 subfamily. As to quaternary structure, homodimer.

The protein localises to the cytoplasm. The catalysed reaction is tRNA(Asp) + L-aspartate + ATP = L-aspartyl-tRNA(Asp) + AMP + diphosphate. Its function is as follows. Catalyzes the attachment of L-aspartate to tRNA(Asp) in a two-step reaction: L-aspartate is first activated by ATP to form Asp-AMP and then transferred to the acceptor end of tRNA(Asp). The polypeptide is Aspartate--tRNA ligase (Clostridium novyi (strain NT)).